A 285-amino-acid polypeptide reads, in one-letter code: MDIISKSGEGNKYTINSAIAFVAYASHIDINTTEFSKVLSGLRDFINDEAIRLGGKISDGSFNKCNGDWYEWLIGIRAIEFFLESETNFIVVKMPNATSFDVMSIYKSCLSEFIYDLRSKLSLNNVNLITSNPDFSIIDIRGRREELKSMLKDISFSNISLSTISEIDNLYKNFIDYAELEHIKSFLSVKTTFRPDRRLQLAHEGSLMKALYTHLQTRTWTINPTGIRYYAAATSIGNADVIGLKTVATHSITDVKSLPQSAVDEIFKINSVLDVDSCLSHILSS.

The Mg(2+) site is built by aspartate 134 and glutamate 204.

In terms of assembly, homodimer. Mg(2+) serves as cofactor.

The catalysed reaction is Endonucleolytic cleavage of DNA to give specific double-stranded fragments with terminal 5'-phosphates.. Its function is as follows. An F and P subtype restriction enzyme that recognizes the double-stranded sequence 5'-RCCGGY-3' and cleaves after R-1. The polypeptide is Type II restriction enzyme Cfr10I (cfr10IR) (Citrobacter freundii).